Consider the following 392-residue polypeptide: NADH-quinone oxidoreductase subunit D 1 (392 aa).

It belongs to the complex I 49 kDa subunit family. NDH-1 is composed of 14 different subunits. Subunits NuoB, C, D, E, F, and G constitute the peripheral sector of the complex.

The protein resides in the cell inner membrane. It carries out the reaction a quinone + NADH + 5 H(+)(in) = a quinol + NAD(+) + 4 H(+)(out). Functionally, NDH-1 shuttles electrons from NADH, via FMN and iron-sulfur (Fe-S) centers, to quinones in the respiratory chain. The immediate electron acceptor for the enzyme in this species is believed to be a menaquinone. Couples the redox reaction to proton translocation (for every two electrons transferred, four hydrogen ions are translocated across the cytoplasmic membrane), and thus conserves the redox energy in a proton gradient. This Cytophaga hutchinsonii (strain ATCC 33406 / DSM 1761 / CIP 103989 / NBRC 15051 / NCIMB 9469 / D465) protein is NADH-quinone oxidoreductase subunit D 1.